Here is a 155-residue protein sequence, read N- to C-terminus: Cytochrome c-type biogenesis protein CcmE (155 aa).

Residues 1 to 8 (MNPLRKKR) lie on the Cytoplasmic side of the membrane. Residues 9 to 29 (LLIIVALLAGVGLAVTLALSA) form a helical; Signal-anchor for type II membrane protein membrane-spanning segment. The Periplasmic portion of the chain corresponds to 30–155 (LQENINLFYT…AASPTPVKQG (126 aa)). Positions 124 and 128 each coordinate heme.

Belongs to the CcmE/CycJ family.

It is found in the cell inner membrane. Its function is as follows. Heme chaperone required for the biogenesis of c-type cytochromes. Transiently binds heme delivered by CcmC and transfers the heme to apo-cytochromes in a process facilitated by CcmF and CcmH. The polypeptide is Cytochrome c-type biogenesis protein CcmE (Pseudomonas syringae pv. syringae (strain B728a)).